Reading from the N-terminus, the 97-residue chain is Integration host factor subunit alpha (97 aa).

Residues 49 to 71 (FGNFDLRDKNQRPGRNPKTGEDI) form a disordered region.

This sequence belongs to the bacterial histone-like protein family. As to quaternary structure, heterodimer of an alpha and a beta chain.

Its function is as follows. This protein is one of the two subunits of integration host factor, a specific DNA-binding protein that functions in genetic recombination as well as in transcriptional and translational control. This is Integration host factor subunit alpha from Shewanella woodyi (strain ATCC 51908 / MS32).